The chain runs to 435 residues: D-aminoacyl-tRNA deacylase (435 aa).

This sequence belongs to the DtdA deacylase family. Monomer. Zn(2+) serves as cofactor.

It carries out the reaction a D-aminoacyl-tRNA + H2O = a tRNA + a D-alpha-amino acid + H(+). It catalyses the reaction glycyl-tRNA(Ala) + H2O = tRNA(Ala) + glycine + H(+). D-aminoacyl-tRNA deacylase with broad substrate specificity. By recycling D-aminoacyl-tRNA to D-amino acids and free tRNA molecules, this enzyme counteracts the toxicity associated with the formation of D-aminoacyl-tRNA entities in vivo. The polypeptide is D-aminoacyl-tRNA deacylase (Methanosphaerula palustris (strain ATCC BAA-1556 / DSM 19958 / E1-9c)).